A 97-amino-acid chain; its full sequence is Protein transport protein SFT1 (97 aa).

Residues 1 to 74 (MSNSRYSQTE…RLTRSLKAGN (74 aa)) lie on the Cytoplasmic side of the membrane. One can recognise a t-SNARE coiled-coil homology domain in the interval 7-69 (SQTESNNDRK…KNSSSRLTRS (63 aa)). The helical; Anchor for type IV membrane protein transmembrane segment at 75 to 94 (SIWRMVGLALLIFFILYTLF) threads the bilayer. Topologically, residues 95 to 97 (KLF) are lumenal.

In terms of assembly, component of a SNARE complex consisting of SED5, GOS1, YKT6 and SFT1.

It is found in the golgi apparatus membrane. Functionally, vesicle SNARE required for retrograde transport within the Golgi complex. The sequence is that of Protein transport protein SFT1 (SFT1) from Saccharomyces cerevisiae (strain ATCC 204508 / S288c) (Baker's yeast).